Consider the following 231-residue polypeptide: Orotidine 5'-phosphate decarboxylase (231 aa).

Residues Asp11, Lys33, Asp60–Thr69, Thr119, Arg180, Gln189, Gly209, and Arg210 contribute to the substrate site. The Proton donor role is filled by Lys62.

This sequence belongs to the OMP decarboxylase family. Type 1 subfamily. In terms of assembly, homodimer.

It carries out the reaction orotidine 5'-phosphate + H(+) = UMP + CO2. The protein operates within pyrimidine metabolism; UMP biosynthesis via de novo pathway; UMP from orotate: step 2/2. Catalyzes the decarboxylation of orotidine 5'-monophosphate (OMP) to uridine 5'-monophosphate (UMP). This chain is Orotidine 5'-phosphate decarboxylase, found in Idiomarina loihiensis (strain ATCC BAA-735 / DSM 15497 / L2-TR).